Reading from the N-terminus, the 228-residue chain is 2,3-bisphosphoglycerate-dependent phosphoglycerate mutase (228 aa).

Substrate-binding positions include 8–15 (RHGQSEWN), 21–22 (TG), Arg60, 87–90 (ERHY), Lys98, 114–115 (RR), and 183–184 (GN). His9 (tele-phosphohistidine intermediate) is an active-site residue. Glu87 serves as the catalytic Proton donor/acceptor.

It belongs to the phosphoglycerate mutase family. BPG-dependent PGAM subfamily.

It carries out the reaction (2R)-2-phosphoglycerate = (2R)-3-phosphoglycerate. It functions in the pathway carbohydrate degradation; glycolysis; pyruvate from D-glyceraldehyde 3-phosphate: step 3/5. Its function is as follows. Catalyzes the interconversion of 2-phosphoglycerate and 3-phosphoglycerate. The protein is 2,3-bisphosphoglycerate-dependent phosphoglycerate mutase of Staphylococcus aureus (strain Mu3 / ATCC 700698).